Here is a 64-residue protein sequence, read N- to C-terminus: Large ribosomal subunit protein bL32 (64 aa).

The segment at 1 to 28 is disordered; that stretch reads MAVQKSRVTPSRRGQRRSHDALTAKKLS.

This sequence belongs to the bacterial ribosomal protein bL32 family.

This chain is Large ribosomal subunit protein bL32 (rpmF), found in Xylella fastidiosa (strain 9a5c).